Reading from the N-terminus, the 123-residue chain is Cysteine-rich DPF motif domain-containing protein 1 (123 aa).

The disordered stretch occupies residues 102-123; sequence RQDLEKRKAPSKRTPSQPGSRT. Polar residues predominate over residues 114–123; the sequence is RTPSQPGSRT.

The protein belongs to the CDPF1 family.

This is Cysteine-rich DPF motif domain-containing protein 1 (CDPF1) from Homo sapiens (Human).